A 352-amino-acid chain; its full sequence is Ion-translocating oxidoreductase complex subunit D (352 aa).

4 helical membrane passes run 20–40, 42–62, 69–91, and 123–143; these read IMLL…WFFG, GTLF…AIVL, VASH…SIPP, and PAMI…TSWL. An FMN phosphoryl threonine modification is found at Thr187. 5 consecutive transmembrane segments (helical) span residues 215-235, 242-262, 267-287, 301-321, and 322-342; these read LAGV…VFLL, WHIP…GWLF, LASP…FFIL, LIFG…GGYP, and DGVA…DYYT.

The protein belongs to the NqrB/RnfD family. The complex is composed of six subunits: RsxA, RsxB, RsxC, RsxD, RsxE and RsxG. It depends on FMN as a cofactor.

The protein localises to the cell inner membrane. Its function is as follows. Part of a membrane-bound complex that couples electron transfer with translocation of ions across the membrane. Required to maintain the reduced state of SoxR. The sequence is that of Ion-translocating oxidoreductase complex subunit D from Salmonella agona (strain SL483).